Consider the following 214-residue polypeptide: Pyridoxine/pyridoxamine 5'-phosphate oxidase (214 aa).

Substrate-binding positions include 8-11 (RLSY) and Arg-66. FMN contacts are provided by residues 61–66 (RTVLLR), 76–77 (FT), Lys-83, and Gln-105. Substrate-binding residues include Tyr-123, Arg-127, and Ser-131. The interval 126–146 (SRPRESQLAAHASDPQSAPVS) is disordered. FMN is bound by residues 141 to 142 (QS) and Trp-187. Substrate is bound at residue 193-195 (RMH). FMN is bound at residue Arg-197.

It belongs to the pyridoxamine 5'-phosphate oxidase family. Homodimer. FMN is required as a cofactor.

It catalyses the reaction pyridoxamine 5'-phosphate + O2 + H2O = pyridoxal 5'-phosphate + H2O2 + NH4(+). It carries out the reaction pyridoxine 5'-phosphate + O2 = pyridoxal 5'-phosphate + H2O2. Its pathway is cofactor metabolism; pyridoxal 5'-phosphate salvage; pyridoxal 5'-phosphate from pyridoxamine 5'-phosphate: step 1/1. It functions in the pathway cofactor metabolism; pyridoxal 5'-phosphate salvage; pyridoxal 5'-phosphate from pyridoxine 5'-phosphate: step 1/1. Its function is as follows. Catalyzes the oxidation of either pyridoxine 5'-phosphate (PNP) or pyridoxamine 5'-phosphate (PMP) into pyridoxal 5'-phosphate (PLP). In Deinococcus deserti (strain DSM 17065 / CIP 109153 / LMG 22923 / VCD115), this protein is Pyridoxine/pyridoxamine 5'-phosphate oxidase.